The sequence spans 436 residues: Enolase (436 aa).

Gln167 contributes to the (2R)-2-phosphoglycerate binding site. Glu209 acts as the Proton donor in catalysis. Mg(2+) contacts are provided by Asp246, Glu291, and Asp318. (2R)-2-phosphoglycerate contacts are provided by Lys343, Arg372, Ser373, and Lys394. Lys343 serves as the catalytic Proton acceptor.

The protein belongs to the enolase family. Component of the RNA degradosome, a multiprotein complex involved in RNA processing and mRNA degradation. Requires Mg(2+) as cofactor.

It localises to the cytoplasm. It is found in the secreted. Its subcellular location is the cell surface. The catalysed reaction is (2R)-2-phosphoglycerate = phosphoenolpyruvate + H2O. Its pathway is carbohydrate degradation; glycolysis; pyruvate from D-glyceraldehyde 3-phosphate: step 4/5. In terms of biological role, catalyzes the reversible conversion of 2-phosphoglycerate (2-PG) into phosphoenolpyruvate (PEP). It is essential for the degradation of carbohydrates via glycolysis. The polypeptide is Enolase (Haemophilus influenzae (strain ATCC 51907 / DSM 11121 / KW20 / Rd)).